The chain runs to 622 residues: Prolactin receptor (622 aa).

The signal sequence occupies residues 1-24 (MKENVASATVFTLLLFLNTCLLNG). Residues 25–234 (QLPPGKPEIF…QIPSDFTMND (210 aa)) lie on the Extracellular side of the membrane. Fibronectin type-III domains are found at residues 27–128 (PPGK…VQPD) and 129–229 (PPLE…IPSD). Cys-36 and Cys-46 form a disulfide bridge. Asn-59 carries N-linked (GlcNAc...) asparagine glycosylation. The cysteines at positions 75 and 86 are disulfide-linked. Asn-104 carries N-linked (GlcNAc...) asparagine glycosylation. Residues Asp-211 and His-212 each coordinate Zn(2+). Positions 215–219 (WSAWS) match the WSXWS motif motif. The N-linked (GlcNAc...) asparagine glycan is linked to Asn-233. A helical transmembrane segment spans residues 235-258 (TTVWISVAVLSAVICLIIVWAVAL). At 259–622 (KGYSMVTCIF…DPACFTHSFH (364 aa)) the chain is on the cytoplasmic side. Residues 267–275 (IFPPVPGPK) carry the Box 1 motif motif. 3 disordered regions span residues 326–378 (MSVH…YDPE), 461–505 (SSQT…GSAK), and 520–545 (ALSL…NNKE). The segment covering 466–486 (KSREEGKATQQREVESFHSET) has biased composition (basic and acidic residues).

It belongs to the type I cytokine receptor family. Type 1 subfamily. Homodimer upon hormone binding. Interacts with SMARCA1. Interacts with GH1. Interacts with CSH. Interacts with NEK3 and VAV2 and this interaction is prolactin-dependent. As to expression, expressed in breast, placenta, kidney, liver and pancreas.

It is found in the membrane. It localises to the secreted. In terms of biological role, this is a receptor for the anterior pituitary hormone prolactin (PRL). Acts as a prosurvival factor for spermatozoa by inhibiting sperm capacitation through suppression of SRC kinase activation and stimulation of AKT. Isoform 4 is unable to transduce prolactin signaling. Isoform 6 is unable to transduce prolactin signaling. The protein is Prolactin receptor (PRLR) of Homo sapiens (Human).